Reading from the N-terminus, the 239-residue chain is mRNA turnover protein 4 homolog (239 aa).

The interval 216-239 (QQMGDDLPESAPESEGESEEEDDS) is disordered. Residues 221–239 (DLPESAPESEGESEEEDDS) are compositionally biased toward acidic residues. 3 positions are modified to phosphoserine: serine 225, serine 229, and serine 233.

The protein belongs to the universal ribosomal protein uL10 family. In terms of assembly, associates with the pre-60S ribosomal particle. Interacts with MINAS-60 (product of an alternative open reading frame of RBM10).

It is found in the nucleus. It localises to the nucleolus. The protein resides in the cytoplasm. Functionally, component of the ribosome assembly machinery. Nuclear paralog of the ribosomal protein P0, it binds pre-60S subunits at an early stage of assembly in the nucleolus, and is replaced by P0 in cytoplasmic pre-60S subunits and mature 80S ribosomes. This is mRNA turnover protein 4 homolog (MRTO4) from Bos taurus (Bovine).